Reading from the N-terminus, the 213-residue chain is Protein DMP3 (213 aa).

The disordered stretch occupies residues Met1 to Arg27. The next 4 membrane-spanning stretches (helical) occupy residues Leu45–Thr65, Thr74–Phe94, Ile136–Leu156, and Val176–Pro196.

The protein belongs to the plant DMP1 protein family. Expressed in leaves, siliques and roots (e.g. root hairs).

It is found in the endoplasmic reticulum membrane. Involved in membrane remodeling. The chain is Protein DMP3 from Arabidopsis thaliana (Mouse-ear cress).